The following is a 50-amino-acid chain: Large ribosomal subunit protein bL33B (50 aa).

Belongs to the bacterial ribosomal protein bL33 family.

In Metamycoplasma arthritidis (strain 158L3-1) (Mycoplasma arthritidis), this protein is Large ribosomal subunit protein bL33B.